The chain runs to 608 residues: Isocitrate dehydrogenase kinase/phosphatase (608 aa).

Residues 327–333 (APGIKGL) and Lys-348 contribute to the ATP site. Asp-383 is an active-site residue.

Belongs to the AceK family.

Its subcellular location is the cytoplasm. The catalysed reaction is L-seryl-[isocitrate dehydrogenase] + ATP = O-phospho-L-seryl-[isocitrate dehydrogenase] + ADP + H(+). Bifunctional enzyme which can phosphorylate or dephosphorylate isocitrate dehydrogenase (IDH) on a specific serine residue. This is a regulatory mechanism which enables bacteria to bypass the Krebs cycle via the glyoxylate shunt in response to the source of carbon. When bacteria are grown on glucose, IDH is fully active and unphosphorylated, but when grown on acetate or ethanol, the activity of IDH declines drastically concomitant with its phosphorylation. The polypeptide is Isocitrate dehydrogenase kinase/phosphatase (Burkholderia ambifaria (strain ATCC BAA-244 / DSM 16087 / CCUG 44356 / LMG 19182 / AMMD) (Burkholderia cepacia (strain AMMD))).